The primary structure comprises 172 residues: Lipopolysaccharide export system protein LptA (172 aa).

Positions 1-23 (MKLVSNKILFLATMVLASSSAFA) are cleaved as a signal peptide.

This sequence belongs to the LptA family. Component of the lipopolysaccharide transport and assembly complex.

The protein resides in the periplasm. In terms of biological role, involved in the assembly of lipopolysaccharide (LPS). Required for the translocation of LPS from the inner membrane to the outer membrane. May form a bridge between the inner membrane and the outer membrane, via interactions with LptC and LptD, thereby facilitating LPS transfer across the periplasm. This chain is Lipopolysaccharide export system protein LptA, found in Haemophilus influenzae (strain ATCC 51907 / DSM 11121 / KW20 / Rd).